The primary structure comprises 428 residues: UPF0229 protein YeaH (428 aa).

Over residues 77-90 (PGNDHFIQNDRIER) the composition is skewed to basic and acidic residues. The interval 77-111 (PGNDHFIQNDRIERPQSGGGGGSGSGQGQASQDGE) is disordered. Residues 93–103 (SGGGGGSGSGQ) are compositionally biased toward gly residues.

It belongs to the UPF0229 family.

The sequence is that of UPF0229 protein YeaH from Salmonella typhi.